Reading from the N-terminus, the 238-residue chain is Endonuclease V (238 aa).

The Mg(2+) site is built by Asp-46 and Asp-116.

The protein belongs to the endonuclease V family. Mg(2+) is required as a cofactor.

It localises to the cytoplasm. The catalysed reaction is Endonucleolytic cleavage at apurinic or apyrimidinic sites to products with a 5'-phosphate.. DNA repair enzyme involved in the repair of deaminated bases. Selectively cleaves double-stranded DNA at the second phosphodiester bond 3' to a deoxyinosine leaving behind the intact lesion on the nicked DNA. The chain is Endonuclease V from Bacillus subtilis (strain 168).